Here is a 184-residue protein sequence, read N- to C-terminus: Inner membrane-spanning protein YciB (184 aa).

Helical transmembrane passes span 19–39 (LVGI…QLLI), 52–72 (LFMG…NQLE), 76–96 (WKVT…QYGF), 123–143 (LGWA…SQYL), and 151–171 (FKTF…GIYI).

Belongs to the YciB family.

The protein localises to the cell inner membrane. Its function is as follows. Plays a role in cell envelope biogenesis, maintenance of cell envelope integrity and membrane homeostasis. The polypeptide is Inner membrane-spanning protein YciB (Pasteurella multocida (strain Pm70)).